Here is a 334-residue protein sequence, read N- to C-terminus: Tryptophan--tRNA ligase (334 aa).

ATP-binding positions include 11-13 (QPS) and 19-20 (GN). Residues 12–20 (PSGELTIGN) carry the 'HIGH' region motif. Asp-135 contacts L-tryptophan. ATP contacts are provided by residues 147–149 (GED), Val-186, and 195–199 (KMSKS). The 'KMSKS' region signature appears at 195–199 (KMSKS).

The protein belongs to the class-I aminoacyl-tRNA synthetase family. In terms of assembly, homodimer.

It is found in the cytoplasm. It catalyses the reaction tRNA(Trp) + L-tryptophan + ATP = L-tryptophyl-tRNA(Trp) + AMP + diphosphate + H(+). In terms of biological role, catalyzes the attachment of tryptophan to tRNA(Trp). The polypeptide is Tryptophan--tRNA ligase (Klebsiella aerogenes (Enterobacter aerogenes)).